We begin with the raw amino-acid sequence, 154 residues long: Putative protein heh-1 (154 aa).

Residues methionine 1–alanine 15 form the signal peptide. Cystine bridges form between cysteine 39–cysteine 50 and cysteine 97–cysteine 103.

The protein belongs to the NPC2 family.

It is found in the secreted. The chain is Putative protein heh-1 (heh-1) from Caenorhabditis elegans.